The chain runs to 63 residues: Large ribosomal subunit protein bL35 (63 aa).

It belongs to the bacterial ribosomal protein bL35 family.

The sequence is that of Large ribosomal subunit protein bL35 from Campylobacter concisus (strain 13826).